The primary structure comprises 149 residues: NADH-ubiquinone oxidoreductase chain 6 (149 aa).

Transmembrane regions (helical) follow at residues 23-43 (ILML…FYFI), 51-71 (MMMI…MISL), 83-103 (LSVT…MTKL), and 114-134 (VNFV…LTII).

It belongs to the complex I subunit 6 family.

It is found in the mitochondrion membrane. The catalysed reaction is a ubiquinone + NADH + 5 H(+)(in) = a ubiquinol + NAD(+) + 4 H(+)(out). In terms of biological role, core subunit of the mitochondrial membrane respiratory chain NADH dehydrogenase (Complex I) that is believed to belong to the minimal assembly required for catalysis. Complex I functions in the transfer of electrons from NADH to the respiratory chain. The immediate electron acceptor for the enzyme is believed to be ubiquinone. This Rhipicephalus sanguineus (Brown dog tick) protein is NADH-ubiquinone oxidoreductase chain 6 (ND6).